Here is a 224-residue protein sequence, read N- to C-terminus: Thymidylate kinase (224 aa).

7-14 lines the ATP pocket; the sequence is GIEGSGKS.

This sequence belongs to the thymidylate kinase family.

It carries out the reaction dTMP + ATP = dTDP + ADP. Phosphorylation of dTMP to form dTDP in both de novo and salvage pathways of dTTP synthesis. This chain is Thymidylate kinase, found in Nitratidesulfovibrio vulgaris (strain DP4) (Desulfovibrio vulgaris).